The chain runs to 267 residues: Transcription factor HES-1 (267 aa).

Positions 1-45 are disordered; the sequence is MPADLMEKNSSSPVAATPASMSNTPDKPKTASEHRKSSKPIMEKR. Positions 8–25 are enriched in polar residues; sequence KNSSSPVAATPASMSNTP. Over residues 26–35 the composition is skewed to basic and acidic residues; that stretch reads DKPKTASEHR. The region spanning 34–91 is the bHLH domain; that stretch reads HRKSSKPIMEKRRRARINESLGQLKTLILDALKKDSSRHSKLEKADILEMTVKHLRNL. The 34-residue stretch at 110–143 folds into the Orange domain; that stretch reads YRAGFSECMNEVTRFLSTCEGVNTDVRTRLLGHL. The WRPW motif signature appears at 264–267; that stretch reads WRPW.

In terms of assembly, transcription repression requires formation of a complex with a corepressor protein of the Groucho/TLE family. Interacts with the bHLH protein hes2, and binds DNA in the form of a heterodimer with the bHLH protein hey1/hrt1. Interacts with the bHLH protein hes6; this interaction may inhibit the transcriptional repressor activity.

The protein localises to the nucleus. Functionally, transcriptional repressor of a subset of early mesodermal genes including myod1 and t/bra. Binds DNA on N-box motifs: 5'-CACNAG-3'. Acts as a negative regulator of myogenesis, mediating Notch signaling to repress expression of myod1. The polypeptide is Transcription factor HES-1 (Xenopus tropicalis (Western clawed frog)).